Reading from the N-terminus, the 485-residue chain is MDFSSTRVLCIGDVMLDRFMHGSVERISPEAPVPVLRITSTHSMLGGAGNVAHNIADLGGTAILVGLIGHDDTAIALRTHLERVPGIVNALVESPHRPTICKTRFLAAQQQVVRTDDESHLPTQPAEEMLLQTMVATHITECGAVILSDYGKGVLSPAVIKHVIGLARQAGIPVFVDPKRLDFSVYAGATCITPNVKELSAAAHQRADDEASVIAAARIVMQQAEGASILATRSEKGMMLIEAPAEGRDDIAIHTVPARAREVFDVSGAGDTVIATLALAHASGLTLESAMRISNAAAGVVVSKAGTATLNVDELRAELDESAISNGSTGSARSLGEARSLVKKWKQLGLTVGFTNGCFDILHAGHVSLLNEARTRCDRLIVAVNTDASVSRLKGPTRPINGFEDRCTVLAGLRSVDCVVGFQEDTPLSVISVLLPDRLFKGADYREEDVVGGDVVRAAGGKVELIDLVPGRSTTGIVKKISTLT.

The ribokinase stretch occupies residues 1–326 (MDFSSTRVLC…AELDESAISN (326 aa)). 195–198 (NVKE) is an ATP binding site. Asp-271 is a catalytic residue. Positions 354–485 (FTNGCFDILH…GIVKKISTLT (132 aa)) are cytidylyltransferase.

The protein in the N-terminal section; belongs to the carbohydrate kinase PfkB family. It in the C-terminal section; belongs to the cytidylyltransferase family. In terms of assembly, homodimer.

It catalyses the reaction D-glycero-beta-D-manno-heptose 7-phosphate + ATP = D-glycero-beta-D-manno-heptose 1,7-bisphosphate + ADP + H(+). The catalysed reaction is D-glycero-beta-D-manno-heptose 1-phosphate + ATP + H(+) = ADP-D-glycero-beta-D-manno-heptose + diphosphate. It participates in nucleotide-sugar biosynthesis; ADP-L-glycero-beta-D-manno-heptose biosynthesis; ADP-L-glycero-beta-D-manno-heptose from D-glycero-beta-D-manno-heptose 7-phosphate: step 1/4. Its pathway is nucleotide-sugar biosynthesis; ADP-L-glycero-beta-D-manno-heptose biosynthesis; ADP-L-glycero-beta-D-manno-heptose from D-glycero-beta-D-manno-heptose 7-phosphate: step 3/4. Catalyzes the phosphorylation of D-glycero-D-manno-heptose 7-phosphate at the C-1 position to selectively form D-glycero-beta-D-manno-heptose-1,7-bisphosphate. In terms of biological role, catalyzes the ADP transfer from ATP to D-glycero-beta-D-manno-heptose 1-phosphate, yielding ADP-D-glycero-beta-D-manno-heptose. The sequence is that of Bifunctional protein HldE from Granulibacter bethesdensis (strain ATCC BAA-1260 / CGDNIH1).